The sequence spans 342 residues: Small ribosomal subunit protein uS2 (342 aa).

The tract at residues 235 to 283 (EENAPFEQDEPRKPSQKPKQNRPENKPRFDKQAPRAAAKPEVKAEVKPE) is disordered. The segment covering 255–283 (NRPENKPRFDKQAPRAAAKPEVKAEVKPE) has biased composition (basic and acidic residues).

Belongs to the universal ribosomal protein uS2 family.

This Acholeplasma laidlawii (strain PG-8A) protein is Small ribosomal subunit protein uS2.